A 573-amino-acid chain; its full sequence is DEAD-box ATP-dependent RNA helicase 47A (573 aa).

Residues 131 to 159 (KSFEELGLPPLLIDRLNKEGLTAPTEVQS) carry the Q motif motif. Positions 162-362 (IPIISQKHDA…RSWGHDPVLV (201 aa)) constitute a Helicase ATP-binding domain. 175–182 (SYTGSGKT) is an ATP binding site. A DEAD box motif is present at residues 293–296 (DEVD). The Helicase C-terminal domain maps to 421–565 (TLRRCIHALE…PCEFTEGKLL (145 aa)).

This sequence belongs to the DEAD box helicase family.

The enzyme catalyses ATP + H2O = ADP + phosphate + H(+). The sequence is that of DEAD-box ATP-dependent RNA helicase 47A from Oryza sativa subsp. japonica (Rice).